Consider the following 389-residue polypeptide: Homoserine O-acetyltransferase (389 aa).

Positions 63-371 (NAVLVLHALT…SSDYGHDGFL (309 aa)) constitute an AB hydrolase-1 domain. Ser-168 (nucleophile) is an active-site residue. Position 240 (Arg-240) interacts with substrate. Catalysis depends on residues Asp-334 and His-367. Asp-368 is a substrate binding site.

The protein belongs to the AB hydrolase superfamily. MetX family. Homodimer.

The protein resides in the cytoplasm. The enzyme catalyses L-homoserine + acetyl-CoA = O-acetyl-L-homoserine + CoA. It functions in the pathway amino-acid biosynthesis; L-methionine biosynthesis via de novo pathway; O-acetyl-L-homoserine from L-homoserine: step 1/1. Functionally, transfers an acetyl group from acetyl-CoA to L-homoserine, forming acetyl-L-homoserine. The chain is Homoserine O-acetyltransferase from Clavibacter michiganensis subsp. michiganensis (strain NCPPB 382).